A 228-amino-acid polypeptide reads, in one-letter code: UPF0758 protein Gura_4138 (228 aa).

The region spanning 106–228 (RFTSPSQVFE…FLSFVDRGMM (123 aa)) is the MPN domain. Zn(2+) is bound by residues H177, H179, and D190. Residues 177-190 (HNHPTGDPTPSRED) carry the JAMM motif motif.

Belongs to the UPF0758 family.

This chain is UPF0758 protein Gura_4138, found in Geotalea uraniireducens (strain Rf4) (Geobacter uraniireducens).